A 640-amino-acid chain; its full sequence is MAQGSRAPSGPPLPVLPVDDWLNFRVDLFGDEHRRLLLEMLTQGCSNFVGLLNFGVPSPVYALEALVDFQVRNAFMKVKPVAQEIIRICILANHYRNSRDVLRDLRTQLDVLYSDPLKTRLLRGLIRLCRAAQTGVKPEDISVHLGADDVTFGVLKRALVRLHRVRDALGLRASPEAEARYPRLTTYNLLFHPPPFTTVEAVDLCAENLSDVTQRRNRPLRCLTSIKRPGSRTLEDALNDMYLLLTLRHLQLRHALELQMMQDWVVERCNRLCDALYFCYTQAPETRQTFVTLVRGLELARQHSSPAFQPMLYNLLQLLTQLHEANVYLCPGYLHFSAYKLLKKIQSVSDARERGEFGDEDEEQENDGEPREAQLDLEADPTAREGELFFFSKNLYGNGEVFRVPEQPSRYLRRRMFVERPETLQIFYNFHEGKITTETYHLQRIYSMMIEGASRQTGLTPKRFMELLDRAPLGQESEPEITEHRDLFADVFRRPVTDAASSSSASSSSSSASPNSVSLPSARSSSTRTTTPASTYTSAGTSSTTGLLLSSSLSGSHGISSADLEQPPRQRRRMVSVTLFSPYSVAYSHHRRHRRRRSPPPAPRGPAHTRFQGPDSMPSTSYGSDVEDPRDDLAENLRHL.

Disordered regions lie at residues 353 to 373, 500 to 571, and 586 to 640; these read ERGEFGDEDEEQENDGEPREA, ASSS…PRQR, and AYSH…LRHL. Over residues 358 to 367 the composition is skewed to acidic residues; the sequence is GDEDEEQEND. Low complexity predominate over residues 500–562; that stretch reads ASSSSASSSS…LSGSHGISSA (63 aa). Basic residues predominate over residues 588 to 598; that stretch reads SHHRRHRRRRS. Over residues 631–640 the composition is skewed to basic and acidic residues; that stretch reads DDLAENLRHL.

Belongs to the herpesviridae pp85 family. Interacts with UL82. Interacts with isoform UL35A. Interacts with host UBP7; this interaction significantly inhibits the ability of USP7 to form nuclear bodies. Interacts with host DCAF1 (via C-terminus). Interacts with host SNX5; this interaction allows proper gB localization during viral assembly. Interacts with host TBK1; this interaction prevents type I interferon production. In terms of assembly, interacts with UL82. Interacts with isoform UL35. Interacts with host UBP7; this interaction significantly inhibits the ability of USP7 to form nuclear bodies. Interacts with host SNX5; this interaction allows proper gB localization during viral assembly.

The protein resides in the virion tegument. It localises to the host nucleus. The protein localises to the host cytoplasm. Functionally, plays important role in immediate-early gene expression through interaction with UL82. Forms nuclear bodies in host nucleus, independently of PML. In turn, UL35 nuclear bodies associate with and remodel PML bodies. Through interaction with host DCAF1, causes cells to accumulate in the G2 phase of the cell cycle by inducing a DNA damage response. Regulates viral assembly by controlling the localization of the essential gB through regulation of a retrograde transport pathway. This modulation occurs via binding and inhibition of host sorting nexin 5/SNX5. Also plays a role in the inhibition of pattern recognition receptor-mediated type I interferon signaling at the level of TBK1. Promotes cytoplasmic UL82 accumulation and inhibits UL35-containing nuclear bodies formation. Regulates viral assembly by controlling the localization of the essential gB through regulation of a retrograde transport pathway. This modulation occurs via binding and inhibition of host sorting nexin 5/SNX5. The sequence is that of Protein UL35 (UL35) from Homo sapiens (Human).